Reading from the N-terminus, the 577-residue chain is Urease subunit alpha (577 aa).

The 442-residue stretch at Gly136–Phe577 folds into the Urease domain. Ni(2+)-binding residues include His141, His143, and Lys224. Lys224 is modified (N6-carboxylysine). Residue His226 coordinates substrate. Residues His253 and His279 each contribute to the Ni(2+) site. Residue His327 is the Proton donor of the active site. Asp367 contributes to the Ni(2+) binding site.

This sequence belongs to the metallo-dependent hydrolases superfamily. Urease alpha subunit family. As to quaternary structure, heterotrimer of UreA (gamma), UreB (beta) and UreC (alpha) subunits. Three heterotrimers associate to form the active enzyme. It depends on Ni cation as a cofactor. In terms of processing, carboxylation allows a single lysine to coordinate two nickel ions.

Its subcellular location is the cytoplasm. The catalysed reaction is urea + 2 H2O + H(+) = hydrogencarbonate + 2 NH4(+). It functions in the pathway nitrogen metabolism; urea degradation; CO(2) and NH(3) from urea (urease route): step 1/1. This is Urease subunit alpha from Mycobacterium marinum (strain ATCC BAA-535 / M).